The chain runs to 197 residues: Adenylyl-sulfate kinase (197 aa).

Residue G33–S40 coordinates ATP. S107 functions as the Phosphoserine intermediate in the catalytic mechanism.

It belongs to the APS kinase family.

It carries out the reaction adenosine 5'-phosphosulfate + ATP = 3'-phosphoadenylyl sulfate + ADP + H(+). The protein operates within sulfur metabolism; hydrogen sulfide biosynthesis; sulfite from sulfate: step 2/3. In terms of biological role, catalyzes the synthesis of activated sulfate. The sequence is that of Adenylyl-sulfate kinase from Bacillus pumilus (strain SAFR-032).